Here is a 156-residue protein sequence, read N- to C-terminus: Holliday junction resolvase (156 aa).

Belongs to the RuvC family. Poxviruses-type subfamily. It depends on Mg(2+) as a cofactor.

Its function is as follows. Nuclease that specifically cleaves and resolves four-way DNA Holliday junctions into linear duplex products. The polypeptide is Holliday junction resolvase (Vertebrata (FPV)).